The sequence spans 245 residues: Endonuclease III (245 aa).

Residues Met-119–Gly-138 enclose the HhH domain. [4Fe-4S] cluster-binding residues include Cys-198, Cys-205, Cys-208, and Cys-214.

Belongs to the Nth/MutY family. [4Fe-4S] cluster is required as a cofactor.

It catalyses the reaction 2'-deoxyribonucleotide-(2'-deoxyribose 5'-phosphate)-2'-deoxyribonucleotide-DNA = a 3'-end 2'-deoxyribonucleotide-(2,3-dehydro-2,3-deoxyribose 5'-phosphate)-DNA + a 5'-end 5'-phospho-2'-deoxyribonucleoside-DNA + H(+). Functionally, DNA repair enzyme that has both DNA N-glycosylase activity and AP-lyase activity. The DNA N-glycosylase activity releases various damaged pyrimidines from DNA by cleaving the N-glycosidic bond, leaving an AP (apurinic/apyrimidinic) site. The AP-lyase activity cleaves the phosphodiester bond 3' to the AP site by a beta-elimination, leaving a 3'-terminal unsaturated sugar and a product with a terminal 5'-phosphate. Has a preference for oxidized pyrimidines, such as thymine glycol (prefers 5S isomers) 5,6-dihydrouracil:G, 5-hydroxyuracil:G, 5-hydroxycytosine:G and urea:A. Cleaves ssDNA containing an AP site. The polypeptide is Endonuclease III (Mycobacterium tuberculosis (strain ATCC 25618 / H37Rv)).